The following is a 343-amino-acid chain: Uroporphyrinogen decarboxylase (343 aa).

Residues 23 to 27 (RQAGR), D73, Y150, S205, and H322 each bind substrate.

Belongs to the uroporphyrinogen decarboxylase family. Homodimer.

The protein localises to the cytoplasm. The catalysed reaction is uroporphyrinogen III + 4 H(+) = coproporphyrinogen III + 4 CO2. Its pathway is porphyrin-containing compound metabolism; protoporphyrin-IX biosynthesis; coproporphyrinogen-III from 5-aminolevulinate: step 4/4. In terms of biological role, catalyzes the decarboxylation of four acetate groups of uroporphyrinogen-III to yield coproporphyrinogen-III. The sequence is that of Uroporphyrinogen decarboxylase from Cereibacter sphaeroides (strain KD131 / KCTC 12085) (Rhodobacter sphaeroides).